The primary structure comprises 39 residues: Photosystem II reaction center protein L (39 aa).

A helical membrane pass occupies residues 18–38 (SLYLGLLLTFVMGILFSSYFF).

The protein belongs to the PsbL family. PSII is composed of 1 copy each of membrane proteins PsbA, PsbB, PsbC, PsbD, PsbE, PsbF, PsbH, PsbI, PsbJ, PsbK, PsbL, PsbM, PsbT, PsbX, PsbY, Psb30/Ycf12, peripheral proteins PsbO, CyanoQ (PsbQ), PsbU, PsbV and a large number of cofactors. It forms dimeric complexes.

Its subcellular location is the cellular thylakoid membrane. One of the components of the core complex of photosystem II (PSII). PSII is a light-driven water:plastoquinone oxidoreductase that uses light energy to abstract electrons from H(2)O, generating O(2) and a proton gradient subsequently used for ATP formation. It consists of a core antenna complex that captures photons, and an electron transfer chain that converts photonic excitation into a charge separation. This subunit is found at the monomer-monomer interface and is required for correct PSII assembly and/or dimerization. This Prochlorococcus marinus (strain MIT 9211) protein is Photosystem II reaction center protein L.